The chain runs to 465 residues: Transcriptional protein swt1 (465 aa).

Residues 70–190 form the PINc domain; it reads GLFVLDTNFL…LLSDDKNLSI (121 aa).

Belongs to the SWT1 family.

It is found in the cytoplasm. It localises to the nucleus. Its function is as follows. Involved in transcription. This Schizosaccharomyces pombe (strain 972 / ATCC 24843) (Fission yeast) protein is Transcriptional protein swt1.